The sequence spans 385 residues: 28S rRNA (uridine-N(3))-methyltransferase (385 aa).

Disordered regions lie at residues 1–35 and 47–72; these read MAER…KKKW and QRAQ…NQGR. 2 stretches are compositionally biased toward basic and acidic residues: residues 15-35 and 47-58; these read HGQR…KKKW and QRAQEEEAKRQE. S-adenosyl-L-methionine is bound by residues Arg-293, Gly-313, Asn-342, and Thr-343.

It belongs to the class IV-like SAM-binding methyltransferase superfamily. As to quaternary structure, interacts with INCA1.

The protein localises to the cytoplasm. It localises to the cytoskeleton. It is found in the spindle. The protein resides in the chromosome. Its subcellular location is the centromere. The protein localises to the kinetochore. It localises to the microtubule organizing center. It is found in the centrosome. The enzyme catalyses uridine in 28S rRNA + S-adenosyl-L-methionine = N(3)-methyluridine in 28S rRNA + S-adenosyl-L-homocysteine + H(+). Its function is as follows. S-adenosyl-L-methionine-dependent methyltransferase that specifically methylates the N3 position of a uridine in 28S rRNA. Required for association of the centrosomes with the poles of the bipolar mitotic spindle during metaphase. Also involved in chromosome alignment. May promote centrosome maturation probably by recruiting A-kinase anchor protein AKAP9 to centrosomes in early mitosis. Binds specifically to miRNA MIR145 hairpin, regulates MIR145 expression at a postranscriptional level. The chain is 28S rRNA (uridine-N(3))-methyltransferase from Mus musculus (Mouse).